Consider the following 340-residue polypeptide: Pre-mRNA-splicing factor cwf17 (340 aa).

WD repeat units lie at residues 48 to 87 (GHTA…KNYG), 91 to 130 (GCKG…KIRK), 133 to 173 (GHAG…CIKT), 175 to 214 (EEKY…CSHV), 217 to 256 (GHKD…SAQR), 267 to 306 (GQEH…RYVL), and 308 to 339 (GHEG…LGEL).

Belongs to the 40S cdc5-associated complex (or cwf complex), a spliceosome sub-complex reminiscent of a late-stage spliceosome composed of the U2, U5 and U6 snRNAs and at least brr2, cdc5, cwf2/prp3, cwf3/syf1, cwf4/syf3, cwf5/ecm2, spp42/cwf6, cwf7/spf27, cwf8, cwf9, cwf10, cwf11, cwf12, prp45/cwf13, cwf14, cwf15, cwf16, cwf17, cwf18, cwf19, cwf20, cwf21, cwf22, cwf23, cwf24, cwf25, cwf26, cyp7/cwf27, cwf28, cwf29/ist3, lea1, msl1, prp5/cwf1, prp10, prp12/sap130, prp17, prp22, sap61, sap62, sap114, sap145, slu7, smb1, smd1, smd3, smf1, smg1 and syf2.

The protein resides in the nucleus. Its function is as follows. Involved in mRNA splicing where it associates with cdc5 and the other cwf proteins as part of the spliceosome. The sequence is that of Pre-mRNA-splicing factor cwf17 (cwf17) from Schizosaccharomyces pombe (strain 972 / ATCC 24843) (Fission yeast).